Here is a 628-residue protein sequence, read N- to C-terminus: Probable alpha-L-arabinofuranosidase A (628 aa).

An N-terminal signal peptide occupies residues 1–25 (MVAFSTISGLGALSLLFSIIESVDG). Asn-36, Asn-51, Asn-74, Asn-152, Asn-164, Asn-260, Asn-359, Asn-404, and Asn-493 each carry an N-linked (GlcNAc...) asparagine glycan.

Belongs to the glycosyl hydrolase 51 family.

Its subcellular location is the secreted. It carries out the reaction Hydrolysis of terminal non-reducing alpha-L-arabinofuranoside residues in alpha-L-arabinosides.. Its pathway is glycan metabolism; L-arabinan degradation. In terms of biological role, alpha-L-arabinofuranosidase involved in the degradation of arabinoxylan, a major component of plant hemicellulose. Acts only on small linear 1,5-alpha-linked L-arabinofuranosyl oligosaccharides. In Aspergillus terreus (strain NIH 2624 / FGSC A1156), this protein is Probable alpha-L-arabinofuranosidase A (abfA).